The following is a 451-amino-acid chain: Bifunctional protein GlmU (451 aa).

Residues 1–225 (MLEIIILAAG…EYEVLGVNNR (225 aa)) form a pyrophosphorylase region. Residues 7-10 (LAAG), K21, Q72, 77-78 (GT), 99-101 (YGD), G136, E150, N165, and N223 each bind UDP-N-acetyl-alpha-D-glucosamine. D101 contacts Mg(2+). Mg(2+) is bound at residue N223. The tract at residues 226-246 (LQQAELERIFQRQVAEELMVA) is linker. Positions 247–451 (GATLLDPARL…IKGWARPVKK (205 aa)) are N-acetyltransferase. UDP-N-acetyl-alpha-D-glucosamine contacts are provided by R329 and K347. H359 serves as the catalytic Proton acceptor. UDP-N-acetyl-alpha-D-glucosamine-binding residues include Y362 and N373. Residues A376, 382-383 (NY), S401, A419, and R436 each bind acetyl-CoA.

It in the N-terminal section; belongs to the N-acetylglucosamine-1-phosphate uridyltransferase family. The protein in the C-terminal section; belongs to the transferase hexapeptide repeat family. Homotrimer. Requires Mg(2+) as cofactor.

It is found in the cytoplasm. It catalyses the reaction alpha-D-glucosamine 1-phosphate + acetyl-CoA = N-acetyl-alpha-D-glucosamine 1-phosphate + CoA + H(+). The catalysed reaction is N-acetyl-alpha-D-glucosamine 1-phosphate + UTP + H(+) = UDP-N-acetyl-alpha-D-glucosamine + diphosphate. Its pathway is nucleotide-sugar biosynthesis; UDP-N-acetyl-alpha-D-glucosamine biosynthesis; N-acetyl-alpha-D-glucosamine 1-phosphate from alpha-D-glucosamine 6-phosphate (route II): step 2/2. The protein operates within nucleotide-sugar biosynthesis; UDP-N-acetyl-alpha-D-glucosamine biosynthesis; UDP-N-acetyl-alpha-D-glucosamine from N-acetyl-alpha-D-glucosamine 1-phosphate: step 1/1. It participates in bacterial outer membrane biogenesis; LPS lipid A biosynthesis. In terms of biological role, catalyzes the last two sequential reactions in the de novo biosynthetic pathway for UDP-N-acetylglucosamine (UDP-GlcNAc). The C-terminal domain catalyzes the transfer of acetyl group from acetyl coenzyme A to glucosamine-1-phosphate (GlcN-1-P) to produce N-acetylglucosamine-1-phosphate (GlcNAc-1-P), which is converted into UDP-GlcNAc by the transfer of uridine 5-monophosphate (from uridine 5-triphosphate), a reaction catalyzed by the N-terminal domain. This Saccharophagus degradans (strain 2-40 / ATCC 43961 / DSM 17024) protein is Bifunctional protein GlmU.